Reading from the N-terminus, the 272-residue chain is Probable glutathione S-transferase DHAR2, chloroplastic (272 aa).

The transit peptide at 1–57 (MAVLLRTTTSATTATSGGSSSATALLATTFRRGGRRLLLLPATRGSAPRRAALLTAR) directs the protein to the chloroplast. Glutathione is bound by residues Lys68 and Asp79. L-ascorbate contacts are provided by Lys68 and Asp79. The GST N-terminal domain maps to 70–148 (SLTVPDRLGD…AIEEKYPEPS (79 aa)). Cys80 (nucleophile) is an active-site residue. Residues Lys107, Val120, Ser133, His219, and Trp266 each coordinate glutathione. Residues 126–272 (EEQWVADSDV…IAGWRPKVMG (147 aa)) form the GST C-terminal domain. Lys269 serves as a coordination point for L-ascorbate.

Belongs to the GST superfamily. DHAR family. As to quaternary structure, monomer.

The protein localises to the plastid. The protein resides in the chloroplast. It catalyses the reaction RX + glutathione = an S-substituted glutathione + a halide anion + H(+). The catalysed reaction is L-dehydroascorbate + 2 glutathione = glutathione disulfide + L-ascorbate. Functionally, involved in ascorbate homeostasis. Maintains redox pools of ascorbate by recycling dihydroascorbate (DHA) to ascorbate. Involved in scavenging reactive oxygen species (ROS) under oxidative stresses. The chain is Probable glutathione S-transferase DHAR2, chloroplastic from Oryza sativa subsp. japonica (Rice).